The sequence spans 476 residues: MRIVQVAVEFTPIVKVGGLGDAVASLSKELAKQNDVEVLLPHYPLISKFSSSQVLSERSFYYEFLGKQQASAISYSYEGLTLTIITLDSQIELFSTTSVYSENNVVRFSAFAAAAAAYLQEADPADIVHLHDWHVGLLAGLLKNPLNPVHSKIVFTIHNFGYRGYCSTQLLAASQIDDFHLSHYQLFRDPQTSVLMKGALYCSDYITTVSLTYVQEIINDYSDYELHDAILARNSVFSGIINGIDEDVWNPKTDPALAVQYDASLLSEPDVLFTKKEENRAVLYEKLGISSDYFPLICVISRIVEEKGPEFMKEIILHAMEHSYAFILIGTSQNEVLLNEFRNLQDCLASSPNIRLILDFNDPLARLTYAAADMICIPSHREACGLTQLIAMRYGTVPLVRKTGGLADTVIPGVNGFTFFDTNNFNEFRAMLSNAVTTYRQEPDVWLNLIESGMLRASGLDAMAKHYVNLYQSLLS.

ADP-alpha-D-glucose is bound at residue Lys15.

It belongs to the glycosyltransferase 1 family. Bacterial/plant glycogen synthase subfamily.

The catalysed reaction is [(1-&gt;4)-alpha-D-glucosyl](n) + ADP-alpha-D-glucose = [(1-&gt;4)-alpha-D-glucosyl](n+1) + ADP + H(+). Its pathway is glycan biosynthesis; glycogen biosynthesis. Functionally, synthesizes alpha-1,4-glucan chains using ADP-glucose. This is Glycogen synthase from Chlamydia pneumoniae (Chlamydophila pneumoniae).